A 236-amino-acid chain; its full sequence is Purine nucleoside phosphorylase DeoD-type (236 aa).

His-5 lines the a purine D-ribonucleoside pocket. Phosphate is bound by residues Gly-21, Arg-25, Arg-44, and Arg-88–Thr-91. A purine D-ribonucleoside is bound by residues Glu-180–Glu-182 and Ser-204–Asp-205. The active-site Proton donor is Asp-205.

The protein belongs to the PNP/UDP phosphorylase family. Homohexamer; trimer of homodimers.

The enzyme catalyses a purine D-ribonucleoside + phosphate = a purine nucleobase + alpha-D-ribose 1-phosphate. It catalyses the reaction a purine 2'-deoxy-D-ribonucleoside + phosphate = a purine nucleobase + 2-deoxy-alpha-D-ribose 1-phosphate. Functionally, catalyzes the reversible phosphorolytic breakdown of the N-glycosidic bond in the beta-(deoxy)ribonucleoside molecules, with the formation of the corresponding free purine bases and pentose-1-phosphate. This chain is Purine nucleoside phosphorylase DeoD-type, found in Shewanella sp. (strain MR-4).